The sequence spans 101 residues: Small ribosomal subunit protein uS14 (101 aa).

It belongs to the universal ribosomal protein uS14 family. In terms of assembly, part of the 30S ribosomal subunit. Contacts proteins S3 and S10.

Functionally, binds 16S rRNA, required for the assembly of 30S particles and may also be responsible for determining the conformation of the 16S rRNA at the A site. The sequence is that of Small ribosomal subunit protein uS14 from Shewanella piezotolerans (strain WP3 / JCM 13877).